The following is a 328-amino-acid chain: UPF0194 membrane protein YPA_1093 (328 aa).

The signal sequence occupies residues Met-1–Gly-22. Coiled coils occupy residues Tyr-80 to Glu-109 and Lys-141 to Ala-209.

This sequence belongs to the UPF0194 family.

Its subcellular location is the periplasm. This Yersinia pestis bv. Antiqua (strain Antiqua) protein is UPF0194 membrane protein YPA_1093.